Consider the following 205-residue polypeptide: Recombination protein RecR (205 aa).

The segment at 60–75 (CKVCHNISDTETCRIC) adopts a C4-type zinc-finger fold. The Toprim domain maps to 83-178 (STICVVESIR…KLSVIARGIS (96 aa)).

Belongs to the RecR family.

Its function is as follows. May play a role in DNA repair. It seems to be involved in an RecBC-independent recombinational process of DNA repair. It may act with RecF and RecO. This is Recombination protein RecR from Phocaeicola vulgatus (strain ATCC 8482 / DSM 1447 / JCM 5826 / CCUG 4940 / NBRC 14291 / NCTC 11154) (Bacteroides vulgatus).